The following is a 1123-amino-acid chain: Inner tegument protein (1123 aa).

Disordered regions lie at residues 1–27 (MADR…GPMQ) and 1047–1123 (RPLA…TSYQ). Residues 568–1123 (WDITPTTPAT…PTDLPLTSYQ (556 aa)) are interaction with large tegument protein.

Belongs to the herpesviridae inner tegument protein family. Interacts (via C-terminus) with the large tegument protein/LTP (via N-terminus). Interacts with host DST. Interacts with host RIGI; this interaction inhibits RIGI activation. Interacts with host CGAS; this interaction inhibits host CGAS activation. Interacts with host TAOK3.

It is found in the virion tegument. It localises to the host cytoplasm. The protein resides in the host nucleus. The protein localises to the host Golgi apparatus. Its subcellular location is the host trans-Golgi network. It carries out the reaction L-asparaginyl-[protein] + H2O = L-aspartyl-[protein] + NH4(+). The enzyme catalyses L-glutaminyl-[protein] + H2O = L-glutamyl-[protein] + NH4(+). In terms of biological role, plays an essential role in cytoplasmic secondary envelopment during viral egress. Interacts with the capsid via the large tegument protein/LTP and participates in its transport to the host trans-Golgi network (TGN) where secondary envelopment occurs. Modulates tegumentation and capsid accumulation at the viral assembly complex. Plays a role in microtubule-based retrograde axonal transport to promote neuroinvasion. Also plays a role in the inhibition of host immune response by acting as a viral deamidase. Deamidates host RIGI on two asparagines which becomes unable to sense viral dsRNA. In turn, its ability to trigger antiviral immune response and restrict viral replication is inhibited. Also deamidates a critical asparagine on host CGAS which abolishes cGAMP synthesis and downstream innate immune activation. This is Inner tegument protein (UL37) from Homo sapiens (Human).